A 343-amino-acid polypeptide reads, in one-letter code: Anthranilate phosphoribosyltransferase (343 aa).

Residues G77, 80-81, T85, 87-90, 105-113, and S117 each bind 5-phospho-alpha-D-ribose 1-diphosphate; these read GD, NVST, and KHGNRSSSG. G77 contacts anthranilate. Residue S89 participates in Mg(2+) binding. N108 contributes to the anthranilate binding site. An anthranilate-binding site is contributed by R163. Mg(2+) is bound by residues D222 and E223.

The protein belongs to the anthranilate phosphoribosyltransferase family. Homodimer. It depends on Mg(2+) as a cofactor.

It catalyses the reaction N-(5-phospho-beta-D-ribosyl)anthranilate + diphosphate = 5-phospho-alpha-D-ribose 1-diphosphate + anthranilate. It participates in amino-acid biosynthesis; L-tryptophan biosynthesis; L-tryptophan from chorismate: step 2/5. In terms of biological role, catalyzes the transfer of the phosphoribosyl group of 5-phosphorylribose-1-pyrophosphate (PRPP) to anthranilate to yield N-(5'-phosphoribosyl)-anthranilate (PRA). In Cenarchaeum symbiosum (strain A), this protein is Anthranilate phosphoribosyltransferase.